A 329-amino-acid polypeptide reads, in one-letter code: 4-hydroxythreonine-4-phosphate dehydrogenase (329 aa).

H136 and T137 together coordinate substrate. H166, H211, and H266 together coordinate a divalent metal cation. The substrate site is built by K274, N283, and R292.

Belongs to the PdxA family. In terms of assembly, homodimer. Zn(2+) serves as cofactor. Requires Mg(2+) as cofactor. Co(2+) is required as a cofactor.

The protein localises to the cytoplasm. It carries out the reaction 4-(phosphooxy)-L-threonine + NAD(+) = 3-amino-2-oxopropyl phosphate + CO2 + NADH. The protein operates within cofactor biosynthesis; pyridoxine 5'-phosphate biosynthesis; pyridoxine 5'-phosphate from D-erythrose 4-phosphate: step 4/5. In terms of biological role, catalyzes the NAD(P)-dependent oxidation of 4-(phosphooxy)-L-threonine (HTP) into 2-amino-3-oxo-4-(phosphooxy)butyric acid which spontaneously decarboxylates to form 3-amino-2-oxopropyl phosphate (AHAP). This chain is 4-hydroxythreonine-4-phosphate dehydrogenase, found in Shigella sonnei (strain Ss046).